The following is a 550-amino-acid chain: CTP synthase (550 aa).

The interval 1 to 277 (MNGSADAGPR…GRAVERALGL (277 aa)) is amidoligase domain. S23 is a CTP binding site. A UTP-binding site is contributed by S23. Residue 24–29 (SLGKGI) coordinates ATP. Y64 is a binding site for L-glutamine. D81 serves as a coordination point for ATP. Mg(2+) contacts are provided by D81 and E151. Residues 158–160 (DIE), 198–203 (KTKPTQ), and K234 contribute to the CTP site. Residues 198–203 (KTKPTQ) and K234 contribute to the UTP site. Position 252 (V252) interacts with ATP. The Glutamine amidotransferase type-1 domain occupies 302–549 (KIAIAGKYVK…VEAALAYQER (248 aa)). G364 contacts L-glutamine. C391 functions as the Nucleophile; for glutamine hydrolysis in the catalytic mechanism. L-glutamine-binding positions include 392 to 395 (LGLQ), E415, and R472. Residues H522 and E524 contribute to the active site.

The protein belongs to the CTP synthase family. As to quaternary structure, homotetramer in the presence of UTP and ATP. Is in a protein concentration-dependent equilibrium between monomer, dimer, and tetramer in the absence of UTP and ATP.

It carries out the reaction UTP + L-glutamine + ATP + H2O = CTP + L-glutamate + ADP + phosphate + 2 H(+). The enzyme catalyses L-glutamine + H2O = L-glutamate + NH4(+). It catalyses the reaction UTP + NH4(+) + ATP = CTP + ADP + phosphate + 2 H(+). The protein operates within pyrimidine metabolism; CTP biosynthesis via de novo pathway; CTP from UDP: step 2/2. Allosterically activated by GTP, when glutamine is the substrate. GTP has no effect on the reaction when ammonia is the substrate. The allosteric effector GTP functions by stabilizing the protein conformation that binds the tetrahedral intermediate(s) formed during glutamine hydrolysis. Inhibited by the product CTP, via allosteric rather than competitive inhibition. Functionally, catalyzes the ATP-dependent amination of UTP to CTP with either L-glutamine or ammonia as the source of nitrogen. Regulates intracellular CTP levels through interactions with the four ribonucleotide triphosphates. In Thermus thermophilus (strain ATCC 27634 / DSM 579 / HB8), this protein is CTP synthase.